A 1092-amino-acid polypeptide reads, in one-letter code: Rho GTPase-activating protein 7 (1092 aa).

An SAM domain is found at 11–78 (LTQIEAKEAC…LNKCAVMKLE (68 aa)). 3 positions are modified to phosphoserine: Ser-86, Ser-89, and Ser-129. Disordered stretches follow at residues 121–179 (PKQD…DATT), 297–330 (RSVS…TRSL), 409–434 (GPGH…NSSS), and 492–553 (SDEG…SGVG). The segment covering 130 to 143 (PDNSRLQSATSHES) has biased composition (polar residues). 2 stretches are compositionally biased toward low complexity: residues 154–174 (VASV…AAHS) and 299–325 (VSNS…SPVT). Residues 275-448 (QLNCVEISAL…RLSIYDNVPG (174 aa)) are focal adhesion-targeting (FAT). Ser-322 is subject to Phosphoserine. The segment covering 415–426 (LRRENSHDSPKE) has biased composition (basic and acidic residues). Over residues 500-512 (ALDSVSPCPSSPK) the composition is skewed to polar residues. Positions 514–526 (IHLDVDHDRRTPS) are enriched in basic and acidic residues. Polar residues predominate over residues 527-536 (DLDSTGNSLN). Residues 615-637 (KHGFSWAVPKFMKRIKVPDYKDR) form a polybasic cluster (PBR) region. The Rho-GAP domain occupies 642–848 (VPLTVNVQRS…HMIAECKKLF (207 aa)). An START domain is found at 878-1085 (NSDQPADYRH…RDSFSNQNTE (208 aa)).

In terms of assembly, interacts with EF1A1, facilitates EF1A1 distribution to the membrane periphery and ruffles upon growth factor stimulation and suppresses cell migration. Interacts with tensin TNS1 (via N-terminus); the interaction is decreased by phosphorylation of TNS1. Interacts with TNS3 and PTEN; in resting cells, interacts with TNS3 (via C2 tensin-type domain) but, following growth factor stimulation, TNS3 and PTEN are phosphorylated which leads to weakened interaction with TNS3 and enhanced interaction with PTEN. Interacts (via C-terminus) with tensin TNS4 (via SH2 domain); the interaction is independent of tyrosine phosphorylation of DLC1. As to expression, widely expressed with the highest levels in heart, liver and lung.

It localises to the cytoplasm. Its subcellular location is the cell junction. The protein localises to the focal adhesion. The protein resides in the membrane. In terms of biological role, functions as a GTPase-activating protein for the small GTPases RHOA, RHOB, RHOC and CDC42, terminating their downstream signaling. This induces morphological changes and detachment through cytoskeletal reorganization, playing a critical role in biological processes such as cell migration and proliferation. Also functions in vivo as an activator of the phospholipase PLCD1. Active DLC1 increases cell migration velocity but reduces directionality. Required for growth factor-induced epithelial cell migration; in resting cells, interacts with TNS3 while PTEN interacts with the p85 regulatory subunit of the PI3K kinase complex but growth factor stimulation induces phosphorylation of TNS3 and PTEN, causing them to change their binding preference so that PTEN interacts with DLC1 and TNS3 interacts with p85. The PTEN-DLC1 complex translocates to the posterior of migrating cells to activate RHOA while the TNS3-p85 complex translocates to the leading edge of migrating cells to promote RAC1 activation. The polypeptide is Rho GTPase-activating protein 7 (Dlc1) (Mus musculus (Mouse)).